A 399-amino-acid polypeptide reads, in one-letter code: Serine/threonine-protein kinase PknL (399 aa).

The Cytoplasmic portion of the chain corresponds to 1 to 368 (MVEAGTRDPL…FIWARQHARR (368 aa)). A Protein kinase domain is found at 19 to 278 (YLVQAKIASG…IAMGADLEAI (260 aa)). ATP contacts are provided by residues 25–33 (IASGGTSTV) and lysine 48. Phosphothreonine; by autocatalysis is present on threonine 32. Threonine 62 carries the phosphothreonine; by autocatalysis modification. Aspartate 142 acts as the Proton acceptor in catalysis. Phosphothreonine; by autocatalysis is present on residues threonine 173, threonine 175, and threonine 323. Residues 312–346 (GQLGAKPVHHPTRQLTRQPGDCSEPASGSEPEHEP) are disordered. Residues 369–389 (MVLVWVSVVLAITGLVASAAW) form a helical membrane-spanning segment. At 390 to 399 (TIGSNLSGLL) the chain is on the extracellular side.

The protein belongs to the protein kinase superfamily. Ser/Thr protein kinase family. Autophosphorylated. Thr-173 is required for autophosphorylation and transphosphorylation activities. Thr-175 is not necessary for autophosphorylation activity, but is required for full kinase activity.

It is found in the cell membrane. It carries out the reaction L-seryl-[protein] + ATP = O-phospho-L-seryl-[protein] + ADP + H(+). The catalysed reaction is L-threonyl-[protein] + ATP = O-phospho-L-threonyl-[protein] + ADP + H(+). Functionally, phosphorylates the DNA-binding protein MT2231. May be involved in the regulation of cell division and cell envelope biosynthesis. The sequence is that of Serine/threonine-protein kinase PknL (pknL) from Mycobacterium tuberculosis (strain CDC 1551 / Oshkosh).